We begin with the raw amino-acid sequence, 105 residues long: Large ribosomal subunit protein uL24 (105 aa).

The protein belongs to the universal ribosomal protein uL24 family. As to quaternary structure, part of the 50S ribosomal subunit.

Its function is as follows. One of two assembly initiator proteins, it binds directly to the 5'-end of the 23S rRNA, where it nucleates assembly of the 50S subunit. In terms of biological role, one of the proteins that surrounds the polypeptide exit tunnel on the outside of the subunit. This Xanthobacter autotrophicus (strain ATCC BAA-1158 / Py2) protein is Large ribosomal subunit protein uL24.